A 380-amino-acid chain; its full sequence is Pregnancy-associated glycoprotein 6 (380 aa).

A signal peptide spans 1 to 15 (MKWLVLLGLVSISEC). The propeptide at 16–53 (IVKIPLRRVKTMRKTLSEKNMLNNFLKEHAYRLSQISF) is activation peptide. Asparagine 57 and asparagine 74 each carry an N-linked (GlcNAc...) asparagine glycan. One can recognise a Peptidase A1 domain in the interval 71-377 (YLGNITIGTP…DRGHDRIGLA (307 aa)). Aspartate 89 is an active-site residue. Cysteines 102 and 107 form a disulfide. Asparagine 125 carries N-linked (GlcNAc...) asparagine glycosylation. Residues cysteine 261 and cysteine 265 are joined by a disulfide bond. Aspartate 270 is a catalytic residue. Cysteine 303 and cysteine 337 are joined by a disulfide.

It belongs to the peptidase A1 family. Trophoblast and placental tissue. Produced specifically in the invasive binucleate cells of the placenta.

Its subcellular location is the secreted. The protein resides in the extracellular space. The chain is Pregnancy-associated glycoprotein 6 from Ovis aries (Sheep).